The chain runs to 465 residues: Glutamate--tRNA ligase (465 aa).

The 'HIGH' region signature appears at 11-21 (PSPTGFIHLGN). The 'KMSKS' region signature appears at 243-247 (KMSKR). Lys-246 contacts ATP.

The protein belongs to the class-I aminoacyl-tRNA synthetase family. Glutamate--tRNA ligase type 1 subfamily. As to quaternary structure, monomer.

It is found in the cytoplasm. The catalysed reaction is tRNA(Glu) + L-glutamate + ATP = L-glutamyl-tRNA(Glu) + AMP + diphosphate. Functionally, catalyzes the attachment of glutamate to tRNA(Glu) in a two-step reaction: glutamate is first activated by ATP to form Glu-AMP and then transferred to the acceptor end of tRNA(Glu). In Cupriavidus metallidurans (strain ATCC 43123 / DSM 2839 / NBRC 102507 / CH34) (Ralstonia metallidurans), this protein is Glutamate--tRNA ligase.